A 762-amino-acid polypeptide reads, in one-letter code: 5-methyltetrahydropteroyltriglutamate--homocysteine methyltransferase (762 aa).

Residues 17–20 (REWK) and Lys-111 each bind 5-methyltetrahydropteroyltri-L-glutamate. L-homocysteine is bound by residues 435 to 437 (IGS) and Glu-488. Residues 435 to 437 (IGS) and Glu-488 each bind L-methionine. 5-methyltetrahydropteroyltri-L-glutamate contacts are provided by residues 519–520 (RC) and Trp-565. Position 603 (Asp-603) interacts with L-homocysteine. Position 603 (Asp-603) interacts with L-methionine. Glu-609 serves as a coordination point for 5-methyltetrahydropteroyltri-L-glutamate. The Zn(2+) site is built by His-645, Cys-647, and Glu-669. His-698 acts as the Proton donor in catalysis. Cys-730 provides a ligand contact to Zn(2+).

This sequence belongs to the vitamin-B12 independent methionine synthase family. Zn(2+) serves as cofactor.

The enzyme catalyses 5-methyltetrahydropteroyltri-L-glutamate + L-homocysteine = tetrahydropteroyltri-L-glutamate + L-methionine. The protein operates within amino-acid biosynthesis; L-methionine biosynthesis via de novo pathway; L-methionine from L-homocysteine (MetE route): step 1/1. Catalyzes the transfer of a methyl group from 5-methyltetrahydrofolate to homocysteine resulting in methionine formation. The sequence is that of 5-methyltetrahydropteroyltriglutamate--homocysteine methyltransferase from Bacillus cereus (strain ATCC 14579 / DSM 31 / CCUG 7414 / JCM 2152 / NBRC 15305 / NCIMB 9373 / NCTC 2599 / NRRL B-3711).